The primary structure comprises 469 residues: 3-isopropylmalate dehydratase large subunit 1 (469 aa).

[4Fe-4S] cluster-binding residues include cysteine 344, cysteine 404, and cysteine 407.

Belongs to the aconitase/IPM isomerase family. LeuC type 1 subfamily. As to quaternary structure, heterodimer of LeuC and LeuD. It depends on [4Fe-4S] cluster as a cofactor.

It catalyses the reaction (2R,3S)-3-isopropylmalate = (2S)-2-isopropylmalate. It participates in amino-acid biosynthesis; L-leucine biosynthesis; L-leucine from 3-methyl-2-oxobutanoate: step 2/4. In terms of biological role, catalyzes the isomerization between 2-isopropylmalate and 3-isopropylmalate, via the formation of 2-isopropylmaleate. The polypeptide is 3-isopropylmalate dehydratase large subunit 1 (Rubrobacter xylanophilus (strain DSM 9941 / JCM 11954 / NBRC 16129 / PRD-1)).